A 366-amino-acid polypeptide reads, in one-letter code: Alanine racemase (366 aa).

The Proton acceptor; specific for D-alanine role is filled by Lys40. Lys40 carries the N6-(pyridoxal phosphate)lysine modification. Arg136 contacts substrate. Tyr263 acts as the Proton acceptor; specific for L-alanine in catalysis. Residue Met310 coordinates substrate.

The protein belongs to the alanine racemase family. It depends on pyridoxal 5'-phosphate as a cofactor.

The enzyme catalyses L-alanine = D-alanine. Its pathway is amino-acid biosynthesis; D-alanine biosynthesis; D-alanine from L-alanine: step 1/1. Functionally, catalyzes the interconversion of L-alanine and D-alanine. May also act on other amino acids. The chain is Alanine racemase (alr) from Streptococcus pyogenes serotype M6 (strain ATCC BAA-946 / MGAS10394).